We begin with the raw amino-acid sequence, 265 residues long: Glutamate racemase (265 aa).

Substrate-binding positions include 9 to 10 (DS) and 41 to 42 (YS). Cys-73 acts as the Proton donor/acceptor in catalysis. 74–75 (NT) lines the substrate pocket. Cys-184 serves as the catalytic Proton donor/acceptor. 185-186 (TH) is a substrate binding site.

This sequence belongs to the aspartate/glutamate racemases family.

The catalysed reaction is L-glutamate = D-glutamate. It participates in cell wall biogenesis; peptidoglycan biosynthesis. Provides the (R)-glutamate required for cell wall biosynthesis. The polypeptide is Glutamate racemase (Haemophilus ducreyi (strain 35000HP / ATCC 700724)).